The following is a 361-amino-acid chain: MTAHLRPVLAGLPVYVPGKTVPGAIKLASNETVFGPLPSVRAAIEHATQSINRYPDNGCLAVKAALARHVSSLSAADFGPEHIAVGCGSVSLCQQLVQITASVGDEVIFGWRSFELYPPQVQVAGATAIQVPLTNHTFDLEAMLAAVTERTRLIIVCDPNNPTSTVVQPEALAEFVRSVPPHILVAIDEAYVEYLRDGTVPDSPHLVRTHSNVVVLRTFSKAYGLAGLRVGYAVGQPDVIAPLDKVYVPFTVSSLAQAAAIASVQAADELLARTDAVVAERGRVSAELRAAGFTVPPSQANFVWLPLEDRTTDFVTQAAKAHIVVRPYGADGVRVTIAAPEENDALLRFARCWITHRDGAR.

Lysine 221 carries the post-translational modification N6-(pyridoxal phosphate)lysine.

This sequence belongs to the class-II pyridoxal-phosphate-dependent aminotransferase family. Homodimer. The cofactor is pyridoxal 5'-phosphate.

The catalysed reaction is an aromatic L-alpha-amino acid + 2-oxoglutarate = an aromatic oxo-acid + L-glutamate. In terms of biological role, aminotransferase that catalyzes the conversion of aromatic amino acids and 2-oxoglutarate into corresponding aromatic oxo acids and L-glutamate. This is Aromatic amino acid aminotransferase from Mycobacterium ulcerans (strain Agy99).